The primary structure comprises 42 residues: Aspartate-semialdehyde dehydrogenase leader peptide (42 aa).

The polypeptide is Aspartate-semialdehyde dehydrogenase leader peptide (Streptococcus mutans serotype c (strain ATCC 700610 / UA159)).